We begin with the raw amino-acid sequence, 57 residues long: Large ribosomal subunit protein bL33 (57 aa).

This sequence belongs to the bacterial ribosomal protein bL33 family.

The protein is Large ribosomal subunit protein bL33 of Shewanella halifaxensis (strain HAW-EB4).